Consider the following 110-residue polypeptide: Protein E7 (110 aa).

The segment at 1–47 is E7 terminal domain; it reads MHGPKPTVQEIVLELCPCNEIEPVDLVCHEQLGDSDDEIDEPDHAVN. The short motif at 26-30 is the LXCXE motif; interaction with host RB1 and TMEM173/STING element; it reads LVCHE. The segment at 69–105 is a zinc-finger region; it reads CCKCNNLLQLVVEASRENLRNVELLFMDSLNFVCPWC. The Nuclear export signal signature appears at 87-95; the sequence is LRNVELLFM.

The protein belongs to the papillomaviridae E7 protein family. In terms of assembly, homodimer. Homooligomer. Interacts with host RB1; this interaction induces dissociation of RB1-E2F1 complex thereby disrupting RB1 activity. Interacts with host EP300; this interaction represses EP300 transcriptional activity. Interacts with protein E2; this interaction inhibits E7 oncogenic activity. Interacts with host TMEM173/STING; this interaction impairs the ability of TMEM173/STING to sense cytosolic DNA and promote the production of type I interferon (IFN-alpha and IFN-beta). Highly phosphorylated.

It is found in the host cytoplasm. The protein resides in the host nucleus. Plays a role in viral genome replication by driving entry of quiescent cells into the cell cycle. Stimulation of progression from G1 to S phase allows the virus to efficiently use the cellular DNA replicating machinery to achieve viral genome replication. E7 protein has both transforming and trans-activating activities. Induces the disassembly of the E2F1 transcription factor from RB1, with subsequent transcriptional activation of E2F1-regulated S-phase genes. Interferes with host histone deacetylation mediated by HDAC1 and HDAC2, leading to transcription activation. Also plays a role in the inhibition of both antiviral and antiproliferative functions of host interferon alpha. Interaction with host TMEM173/STING impairs the ability of TMEM173/STING to sense cytosolic DNA and promote the production of type I interferon (IFN-alpha and IFN-beta). The chain is Protein E7 from Human papillomavirus type ME180.